The sequence spans 147 residues: Large ribosomal subunit protein uL15 (147 aa).

Residues 1–42 form a disordered region; sequence MTIKLHHLRPAPGAKTDKTRVGRGEGSKGKTAGRGTKGTKAR. A compositionally biased stretch (basic and acidic residues) spans 15-28; sequence KTDKTRVGRGEGSK.

This sequence belongs to the universal ribosomal protein uL15 family. In terms of assembly, part of the 50S ribosomal subunit.

Functionally, binds to the 23S rRNA. The protein is Large ribosomal subunit protein uL15 of Nocardia farcinica (strain IFM 10152).